We begin with the raw amino-acid sequence, 155 residues long: Low molecular weight phosphotyrosine protein phosphatase 1 (155 aa).

C9 functions as the Nucleophile in the catalytic mechanism. The active site involves R15. The active-site Proton donor is D124.

The protein belongs to the low molecular weight phosphotyrosine protein phosphatase family. In terms of tissue distribution, cone cells and primary pigment cells in developing pupal retina.

It localises to the cytoplasm. The catalysed reaction is O-phospho-L-tyrosyl-[protein] + H2O = L-tyrosyl-[protein] + phosphate. It catalyses the reaction a phosphate monoester + H2O = an alcohol + phosphate. Acts on tyrosine phosphorylated proteins, low-MW aryl phosphates and natural and synthetic acyl phosphates. The chain is Low molecular weight phosphotyrosine protein phosphatase 1 (primo-1) from Drosophila melanogaster (Fruit fly).